The sequence spans 435 residues: Endosome-associated-trafficking regulator 1 (435 aa).

2 positions are modified to phosphoserine: Ser18 and Ser147. 2 disordered regions span residues 136–185 (ASRH…TGWS) and 225–251 (ESLPSWALSDTDSRVSPASPAGSPSAD). A compositionally biased stretch (acidic residues) spans 173-182 (LLDEEEDEDT). Residues 173 to 198 (LLDEEEDEDTGWSGAYLPSAIEQTHP) are required for interaction with PTPN13. Over residues 240 to 250 (SPASPAGSPSA) the composition is skewed to low complexity. Phosphoserine is present on residues Ser243 and Ser247. Residues 261-371 (DRHLRTLQIS…FQRENEALRC (111 aa)) adopt a coiled-coil conformation.

It belongs to the ENTR1 family. In terms of assembly, found in a complex with ENTR1, PTPN13 and GIT1. Interacts with PTPN13 (via the FERM domain). Interacts (via N-terminus) with GIT1 (via N- and C-terminus); this interaction is direct. Interacts with NOD2. Interacts (via N-terminus) with IFT88. Interacts with VPS35. Phosphorylated. As to expression, expressed in the colon (at protein level).

The protein resides in the cytoplasm. Its subcellular location is the early endosome. The protein localises to the endosome. It is found in the recycling endosome. It localises to the midbody. The protein resides in the cytoskeleton. Its subcellular location is the microtubule organizing center. The protein localises to the centrosome. It is found in the cilium basal body. Endosome-associated protein that plays a role in membrane receptor sorting, cytokinesis and ciliogenesis. Involved in the endosome-to-plasma membrane trafficking and recycling of SNX27-retromer-dependent cargo proteins, such as GLUT1. Involved in the regulation of cytokinesis; the function may involve PTPN13 and GIT1. Plays a role in the formation of cilia. Involved in cargo protein localization, such as PKD2, at primary cilia. Involved in the presentation of the tumor necrosis factor (TNF) receptor TNFRSF1A on the cell surface, and hence in the modulation of the TNF-induced apoptosis. This is Endosome-associated-trafficking regulator 1 from Homo sapiens (Human).